A 277-amino-acid polypeptide reads, in one-letter code: Uridine-cytidine kinase 1 (277 aa).

The segment covering 1 to 10 has biased composition (gly residues); that stretch reads MASAGGGDCE. Residues 1 to 29 form a disordered region; it reads MASAGGGDCEGAGPEADRPHQRPFLIGVS. 30–38 provides a ligand contact to ATP; sequence GGTASGKST. Substrate contacts are provided by aspartate 87, tyrosine 115, histidine 120, arginine 169, arginine 178, and glutamine 186. Residue aspartate 215 coordinates ATP. Residues 246 to 277 form a disordered region; sequence RSHKRTFPEPGEHPAVLASGKRSHLESSSRPH. Threonine 251 is modified (phosphothreonine). Positions 268 to 277 are enriched in basic and acidic residues; sequence SHLESSSRPH.

The protein belongs to the uridine kinase family.

It catalyses the reaction uridine + ATP = UMP + ADP + H(+). The enzyme catalyses cytidine + ATP = CMP + ADP + H(+). It functions in the pathway pyrimidine metabolism; CTP biosynthesis via salvage pathway; CTP from cytidine: step 1/3. It participates in pyrimidine metabolism; UMP biosynthesis via salvage pathway; UMP from uridine: step 1/1. Phosphorylates uridine and cytidine to uridine monophosphate and cytidine monophosphate. Does not phosphorylate deoxyribonucleosides or purine ribonucleosides. Can use ATP or GTP as a phosphate donor. The chain is Uridine-cytidine kinase 1 (UCK1) from Bos taurus (Bovine).